A 609-amino-acid polypeptide reads, in one-letter code: Autophagy-related protein 22-1 (609 aa).

The next 4 helical transmembrane spans lie at Y35–L55, T117–I137, L151–V171, and M176–L196. Residues A214–S231 show a composition bias toward basic and acidic residues. Residues A214–G240 are disordered. An N-linked (GlcNAc...) asparagine glycan is attached at N244. The helical transmembrane segment at I287–A307 threads the bilayer. N309 is a glycosylation site (N-linked (GlcNAc...) asparagine). A run of 3 helical transmembrane segments spans residues L317–L337, I381–T401, and A415–W435. N443 carries an N-linked (GlcNAc...) asparagine glycan. A run of 4 helical transmembrane segments spans residues I450–P470, F477–M497, A522–I542, and A552–V572.

Belongs to the ATG22 family.

It localises to the vacuole membrane. Its function is as follows. Vacuolar effluxer which mediate the efflux of amino acids resulting from autophagic degradation. The release of autophagic amino acids allows the maintenance of protein synthesis and viability during nitrogen starvation. The chain is Autophagy-related protein 22-1 (atg22-1) from Aspergillus fumigatus (strain ATCC MYA-4609 / CBS 101355 / FGSC A1100 / Af293) (Neosartorya fumigata).